The chain runs to 278 residues: MEPRAGDGCFLGDVGFWVERTPVHEAAQRGESLQLQQLIDSGACVNQVTVDSITPLHAASLQGQAQCVQLLLAAGAQVDARNIDGSTPLCDACASGSIECVKLLLSYGAKVNPPLYTASPLHEACMSGSSECVRLLIDVGANLEAHDCHFGTPLHVACAREHLDCVKVLLNAGANVNAAKLHETALHHAAKVKNVDLIEMLIEFGGNIYARDNRGKKPSDYTWSSSAPAKCFEYYEKTPLSLSQLCRVSLRKATGVRGLEKVAKLNIPPRLIDYLSYN.

ANK repeat units lie at residues 18–47 (VERTPVHEAAQRGESLQLQQLIDSGACVNQ), 51–80 (DSITPLHAASLQGQAQCVQLLLAAGAQVDA), 84–113 (DGSTPLCDACASGSIECVKLLLSYGAKVNP), 116–145 (YTASPLHEACMSGSSECVRLLIDVGANLEA), 149–178 (HFGTPLHVACAREHLDCVKVLLNAGANVNA), and 181–210 (LHETALHHAAKVKNVDLIEMLIEFGGNIYA). One can recognise an SOCS box domain in the interval 229–278 (AKCFEYYEKTPLSLSQLCRVSLRKATGVRGLEKVAKLNIPPRLIDYLSYN).

This sequence belongs to the ankyrin SOCS box (ASB) family.

It participates in protein modification; protein ubiquitination. May be a substrate-recognition component of a SCF-like ECS (Elongin-Cullin-SOCS-box protein) E3 ubiquitin-protein ligase complex which mediates the ubiquitination and subsequent proteasomal degradation of target proteins. The polypeptide is Ankyrin repeat and SOCS box protein 13 (Asb13) (Mus musculus (Mouse)).